We begin with the raw amino-acid sequence, 282 residues long: 4-hydroxy-3-methylbut-2-enyl diphosphate reductase (282 aa).

Cysteine 12 is a binding site for [4Fe-4S] cluster. Histidine 40 and histidine 72 together coordinate (2E)-4-hydroxy-3-methylbut-2-enyl diphosphate. Dimethylallyl diphosphate is bound by residues histidine 40 and histidine 72. Residues histidine 40 and histidine 72 each coordinate isopentenyl diphosphate. Residue cysteine 94 participates in [4Fe-4S] cluster binding. A (2E)-4-hydroxy-3-methylbut-2-enyl diphosphate-binding site is contributed by histidine 122. A dimethylallyl diphosphate-binding site is contributed by histidine 122. Position 122 (histidine 122) interacts with isopentenyl diphosphate. Glutamate 124 serves as the catalytic Proton donor. Residue threonine 160 coordinates (2E)-4-hydroxy-3-methylbut-2-enyl diphosphate. A [4Fe-4S] cluster-binding site is contributed by cysteine 188. The (2E)-4-hydroxy-3-methylbut-2-enyl diphosphate site is built by serine 216, asparagine 218, and serine 260. Dimethylallyl diphosphate-binding residues include serine 216, asparagine 218, and serine 260. Residues serine 216, asparagine 218, and serine 260 each coordinate isopentenyl diphosphate.

Belongs to the IspH family. [4Fe-4S] cluster serves as cofactor.

The enzyme catalyses isopentenyl diphosphate + 2 oxidized [2Fe-2S]-[ferredoxin] + H2O = (2E)-4-hydroxy-3-methylbut-2-enyl diphosphate + 2 reduced [2Fe-2S]-[ferredoxin] + 2 H(+). It carries out the reaction dimethylallyl diphosphate + 2 oxidized [2Fe-2S]-[ferredoxin] + H2O = (2E)-4-hydroxy-3-methylbut-2-enyl diphosphate + 2 reduced [2Fe-2S]-[ferredoxin] + 2 H(+). It functions in the pathway isoprenoid biosynthesis; dimethylallyl diphosphate biosynthesis; dimethylallyl diphosphate from (2E)-4-hydroxy-3-methylbutenyl diphosphate: step 1/1. It participates in isoprenoid biosynthesis; isopentenyl diphosphate biosynthesis via DXP pathway; isopentenyl diphosphate from 1-deoxy-D-xylulose 5-phosphate: step 6/6. In terms of biological role, catalyzes the conversion of 1-hydroxy-2-methyl-2-(E)-butenyl 4-diphosphate (HMBPP) into a mixture of isopentenyl diphosphate (IPP) and dimethylallyl diphosphate (DMAPP). Acts in the terminal step of the DOXP/MEP pathway for isoprenoid precursor biosynthesis. In Geotalea uraniireducens (strain Rf4) (Geobacter uraniireducens), this protein is 4-hydroxy-3-methylbut-2-enyl diphosphate reductase.